A 95-amino-acid polypeptide reads, in one-letter code: Small ribosomal subunit protein bS6 (95 aa).

The protein belongs to the bacterial ribosomal protein bS6 family.

Binds together with bS18 to 16S ribosomal RNA. The chain is Small ribosomal subunit protein bS6 from Streptococcus agalactiae serotype Ia (strain ATCC 27591 / A909 / CDC SS700).